The chain runs to 1024 residues: Multidrug resistance protein MdtC (1024 aa).

Helical transmembrane passes span 12–32 (VATT…FSLL), 333–353 (EVER…FIFL), 360–380 (LIPA…MYLC), 387–407 (LSLM…IVVL), 435–455 (VLSM…MAGL), 469–489 (VAIG…CAWL), 528–548 (WVMV…ISIP), 853–873 (LWLI…LYES), 875–895 (VHPL…LLAL), 897–917 (LFDA…IGIV), 953–973 (PIIM…LSSG), and 984–1004 (ITIV…TPVI).

Belongs to the resistance-nodulation-cell division (RND) (TC 2.A.6) family. MdtC subfamily. As to quaternary structure, part of a tripartite efflux system composed of MdtA, MdtB and MdtC. MdtC forms a heteromultimer with MdtB.

Its subcellular location is the cell inner membrane. This Yersinia pseudotuberculosis serotype IB (strain PB1/+) protein is Multidrug resistance protein MdtC.